Here is a 410-residue protein sequence, read N- to C-terminus: Acetate kinase (410 aa).

Asn-7 contributes to the Mg(2+) binding site. An ATP-binding site is contributed by Lys-14. Position 88 (Arg-88) interacts with substrate. Asp-145 serves as the catalytic Proton donor/acceptor. Residues 203–207 (HAGNG), 278–280 (DTR), and 326–330 (GIGEN) each bind ATP. Glu-379 lines the Mg(2+) pocket.

The protein belongs to the acetokinase family. In terms of assembly, homodimer. Mg(2+) is required as a cofactor. Requires Mn(2+) as cofactor.

Its subcellular location is the cytoplasm. The catalysed reaction is acetate + ATP = acetyl phosphate + ADP. Its pathway is metabolic intermediate biosynthesis; acetyl-CoA biosynthesis; acetyl-CoA from acetate: step 1/2. In terms of biological role, catalyzes the formation of acetyl phosphate from acetate and ATP. Can also catalyze the reverse reaction. This is Acetate kinase from Chlorante-Aster yellows phytoplasma.